A 120-amino-acid chain; its full sequence is NAD(P)H-quinone oxidoreductase subunit 3, chloroplastic (120 aa).

The next 3 helical transmembrane spans lie at 9–29, 64–84, and 88–108; these read IFWA…LISG, MFAL…PWAM, and VLGV…ILGL.

It belongs to the complex I subunit 3 family. As to quaternary structure, NDH is composed of at least 16 different subunits, 5 of which are encoded in the nucleus.

It localises to the plastid. It is found in the chloroplast thylakoid membrane. It carries out the reaction a plastoquinone + NADH + (n+1) H(+)(in) = a plastoquinol + NAD(+) + n H(+)(out). The enzyme catalyses a plastoquinone + NADPH + (n+1) H(+)(in) = a plastoquinol + NADP(+) + n H(+)(out). Functionally, NDH shuttles electrons from NAD(P)H:plastoquinone, via FMN and iron-sulfur (Fe-S) centers, to quinones in the photosynthetic chain and possibly in a chloroplast respiratory chain. The immediate electron acceptor for the enzyme in this species is believed to be plastoquinone. Couples the redox reaction to proton translocation, and thus conserves the redox energy in a proton gradient. This chain is NAD(P)H-quinone oxidoreductase subunit 3, chloroplastic, found in Aethionema cordifolium (Lebanon stonecress).